Here is a 379-residue protein sequence, read N- to C-terminus: MPHSSLHPSIPCPRGHGAQKAALVLLSACLVTLWGLGEPPEHTLRYLVLHLASLQLGLLLNGVCSLAEELRHIHSRYRGSYWRTVRACLGCPLRRGALLLLSIYFYYSLPNAVGPPFTWMLALLGLSQALNILLGLKGLAPAEISAVCEKGNFNVAHGLAWSYYIGYLRLILPELQARIRTYNQHYNNLLRGAVSQRLYILLPLDCGVPDNLSMADPNIRFLDKLPQQTGDHAGIKDRVYSNSIYELLENGQRAGTCVLEYATPLQTLFAMSQYSQAGFSREDRLEQAKLFCRTLEDILADAPESQNNCRLIAYQEPADDSSFSLSQEVLRHLRQEEKEEVTVGSLKTSAVPSTSTMSQEPELLISGMEKPLPLRTDFS.

Residues 1 to 17 (MPHSSLHPSIPCPRGHG) lie on the Cytoplasmic side of the membrane. Positions 1-190 (MPHSSLHPSI…TYNQHYNNLL (190 aa)) are mediates interaction with ZDHHC1 and ZDHHC11. Residues 18–34 (AQKAALVLLSACLVTLW) form a helical membrane-spanning segment. Lys-20 participates in a covalent cross-link: Glycyl lysine isopeptide (Lys-Gly) (interchain with G-Cter in ubiquitin). Over 35–44 (GLGEPPEHTL) the chain is Lumenal. The chain crosses the membrane as a helical span at residues 45–69 (RYLVLHLASLQLGLLLNGVCSLAEE). Topologically, residues 70–91 (LRHIHSRYRGSYWRTVRACLGC) are cytoplasmic. Residues Cys-88 and Cys-91 are each lipidated (S-palmitoyl cysteine). The chain crosses the membrane as a helical span at residues 92–106 (PLRRGALLLLSIYFY). Over 107–116 (YSLPNAVGPP) the chain is Lumenal. Residues 117-134 (FTWMLALLGLSQALNILL) form a helical membrane-spanning segment. At 135–379 (GLKGLAPAEI…KPLPLRTDFS (245 aa)) the chain is on the cytoplasmic side. Lys-150 is covalently cross-linked (Glycyl lysine isopeptide (Lys-Gly) (interchain with G-Cter in ubiquitin)). The interval 153 to 340 (FNVAHGLAWS…RHLRQEEKEE (188 aa)) is cyclic dinucleotide-binding domain (CBD). 2',3'-cGAMP contacts are provided by Ser-162 and Tyr-167. 3',3'-c-di-GMP-binding residues include Ser-162 and Tyr-167. A 2',3'-cUAMP-binding site is contributed by Tyr-167. Residue Thr-229 is modified to Phosphothreonine. Lys-236 is covalently cross-linked (Glycyl lysine isopeptide (Lys-Gly) (interchain with G-Cter in ubiquitin)). Arg-238 contributes to the 2',3'-cGAMP binding site. Arg-238 contacts 2',3'-cUAMP. 3',3'-c-di-GMP-binding positions include 238 to 241 (RVYS) and Thr-263. Phosphoserine is present on Ser-241. Residue Thr-263 coordinates 2',3'-cGAMP. Thr-263 contributes to the 2',3'-cUAMP binding site. Lys-338 is covalently cross-linked (Glycyl lysine isopeptide (Lys-Gly) (interchain with G-Cter in SUMO)). The interval 340–379 (EVTVGSLKTSAVPSTSTMSQEPELLISGMEKPLPLRTDFS) is C-terminal tail (CTT). The interval 341 to 370 (VTVGSLKTSAVPSTSTMSQEPELLISGMEK) is disordered. Positions 345-359 (SLKTSAVPSTSTMSQ) are enriched in polar residues. Position 354 is a phosphothreonine (Thr-354). At Ser-355 the chain carries Phosphoserine; by MAP3K7. Thr-356 carries the phosphothreonine modification. Ser-358 and Ser-366 each carry phosphoserine; by TBK1. The pLxIS motif motif lies at 363 to 366 (LLIS).

The protein belongs to the STING family. Homodimer; forms a homodimer in absence of cyclic nucleotide (c-di-GMP or cGAMP); 'Lys-63'-linked ubiquitination at Lys-150 is required for homodimerization. Homotetramer; in presence of cyclic nucleotide (c-di-GMP or cGAMP), forms tetramers and higher-order oligomers through side-by-side packing. Interacts (when phosphorylated) with IRF3; following activation and phosphorylation on the pLxIS motif by TBK1, recruits IRF3. Interacts with RIGI, MAVS and SSR2. Interacts with RNF5 and TRIM56. Interacts with TBK1; when homodimer, leading to subsequent production of IFN-beta. Interacts with IFIT1 and IFIT2. Interacts with TRIM29; this interaction induces STING1 ubiquitination and subsequent degradation. Associates with the MHC-II complex. Interacts with STEEP1; interaction takes place upon cGAMP-activation and STING1 phosphorylation by MAP3K7/TAK1 and promotes STING1 translocation to COPII vesicles. Interacts with SEC24A, SEC24B, and SEC24C; promoting translocation to COPII vesicles. Interacts (when ubiquitinated) with SQSTM1; leading to relocalization to autophagosomes. Interacts with SURF4. Interacts with HNRNPA2B1. Interacts with ZDHHC1; ZDHHC1 constitutively interacts with STING1 and in presence of DNA viruses activates it by promoting its cGAMP-induced oligomerization and the recruitment of downstream signaling components. Interacts with ZDHHC11; in presence of DNA viruses promotes the recruitment of IRF3 to STING1. Interacts with TOMM70. Interacts with isoform IFI16-beta of IFI16. Interacts with TAB1; promoting recruitment of TAB1 to the endoplasmic reticulum membrane and subsequent activation of MAP3K7/TAK1. Interacts (via transmembrane domain) with TMEM203. Interacts with DDX41. Interacts with TMEM120A (via C-terminal domain); regulates the trafficking of STING1 from the ER to the ER-Golgi intermediate compartment to elicit antiviral effects. In terms of assembly, (Microbial infection) Interacts with human papillomavirus (HPV) protein E7. As to quaternary structure, (Microbial infection) Interacts with adenovirus early E1A protein. (Microbial infection) Interacts with herpes simplex virus 1 protein ICP34.5; this interaction inhibits the intracellular DNA sensing pathway. In terms of assembly, (Microbial infection) Interacts with Chikungunya virus non-structural protein 1; this interaction results in inhibition of cGAS-STING signaling and increased levels of palmitoylated nsP1 and protein stabilization. As to quaternary structure, (Microbial infection) Interacts with human cytomegalovirus proteins UL94, UL42 and UL138; these interactions result in the inhibition of cGAS-STING signaling. (Microbial infection) Interacts with varivella virus protein 39; this interaction results in the inhibition of cGAS-STING signaling. Phosphorylation by TBK1 leads to activation and production of IFN-beta. Following cyclic nucleotide (c-di-GMP or cGAMP)-binding, activation and translocation from the endoplasmic reticulum, STING1 is phosphorylated by TBK1 at Ser-366 in the pLxIS motif. The phosphorylated pLxIS motif constitutes an IRF3-binding motif, leading to recruitment of the transcription factor IRF3 to induce type-I interferons and other cytokines. The phosphorylated pLxIS motif facilitates SENP2 recruitment during late phase of viral infection. Phosphorylated on tyrosine residues upon MHC-II aggregation. Dephosphorylation by PPP6C leads to inactivation and decreased production of IFN-beta. Phosphorylation at Ser-358 is also required to activate IRF3. Phosphorylation at Ser-355 by MAP3K7/TAK1 facilitates its interaction with STEEP1, promoting STING1 translocation to COPII vesicles. Post-translationally, ubiquitinated. Ubiquitinated via 'Lys-63'-linked ubiquitin chains in response to double-stranded DNA treatment, leading to relocalization to autophagosomes and subsequent degradation; this process is dependent on SQSTM1. 'Lys-63'-linked ubiquitination mediated by TRIM56 at Lys-150 promotes homodimerization and recruitment of the antiviral kinase TBK1 and subsequent production of IFN-beta. 'Lys-48'-linked polyubiquitination at Lys-150 occurring after viral infection is mediated by RNF5 and leads to proteasomal degradation. 'Lys-11'-linked polyubiquitination at Lys-150 by RNF26 leads to stabilize STING1: it protects STING1 from RNF5-mediated 'Lys-48'-linked polyubiquitination. 'Lys-33'-linked and 'Lys-48'-linked deubiquitinated by USP20; leading to its stabilization and promotion of innate antiviral response. 'Lys-48'-linked deubiquitinated by USP44; leading to its stabilization and promotion of innate antiviral response. Deubiquitinated by USP13; leading to inhibition of innate antiviral response. 'Lys-63'-linked deubiquitinated by USP49; leading to inhibition of the subsequent recruitment of TBK1 to the signaling complex. 'Lys-63'-linked ubiquitination mediated by RNF39 promotes the activation of the cGAS-STING pathway. MARCHF5-mediated ubiquitination prevents the oxidation-induced polymer formation. In terms of processing, (Microbial infection) Deubiquitinated by Epstein-Barr virus BPLF1 on both 'Lys-48' and 'Lys-63'-linked ubiquitin chains; leading to inhibition of cGAS-STING signaling. Sumoylated at Lys-338 by TRIM38 during the early phase of viral infection, promoting its stability by preventing its relocalization to autophagosomes and subsequent degradation. Desumoylated by SENP2 during the late phase of viral infection. Post-translationally, palmitoylation takes place in the Golgi apparatus and creates a platform for the recruitment of TBK1. In terms of tissue distribution, ubiquitously expressed. Expressed in skin endothelial cells, alveolar type 2 pneumocytes, bronchial epithelium and alveolar macrophages.

It is found in the endoplasmic reticulum membrane. Its subcellular location is the cytoplasm. It localises to the perinuclear region. The protein localises to the endoplasmic reticulum-Golgi intermediate compartment membrane. The protein resides in the golgi apparatus membrane. It is found in the cytoplasmic vesicle. Its subcellular location is the autophagosome membrane. It localises to the mitochondrion outer membrane. The protein localises to the cell membrane. The catalysed reaction is H(+)(in) = H(+)(out). Its activity is regulated as follows. Activated upon binding to the hydrolysis-resistant 2'3'-cG(s)A(s)MP, an analog of cGAMP, in which phosphodiester linkages are replaced by phosphothioate linkages. Specifically inhibited by small-molecule H-151 (N-(4-ethylphenyl)-N'-1H-indol-3-yl-urea), which covalently binds Cys-91 and prevents palmitoylation and subsequent activation of STING1. In contrast to mouse protein, not activated by anticancer molecule 5,6-dimethylxanthenone 4-acetic acid (DMXAA). Inhibited by compound 18 ([(3S,4S)-2-(4-tert-butyl-3-chlorophenyl)-3-(2,3-dihydro-1,4-benzodioxin-6-yl)-7-fluoro-1-oxo-1,2,3,4-tetrahydroisoquinolin-4-yl]acetate), a competitive inhibitor with slow dissociation kinetics and good oral bioavailability. Homooligomerization and ability to promote the production of type I interferons is activated by C53, a small benzothiazinone-like compound that binds to the transmembrane regions. in the area of the putative pore. In contrast, compound C53, directly inhibits the proton channel activity and facilitate MAP1LC3B/LC3B lipidation and autophagosome formation. Facilitator of innate immune signaling that acts as a sensor of cytosolic DNA from bacteria and viruses and promotes the production of type I interferon (IFN-alpha and IFN-beta). Innate immune response is triggered in response to non-CpG double-stranded DNA from viruses and bacteria delivered to the cytoplasm. Acts by binding cyclic dinucleotides: recognizes and binds cyclic di-GMP (c-di-GMP), a second messenger produced by bacteria, cyclic UMP-AMP (2',3'-cUAMP), and cyclic GMP-AMP (cGAMP), a messenger produced by CGAS in response to DNA virus in the cytosol. Upon binding to c-di-GMP, cUAMP or cGAMP, STING1 oligomerizes, translocates from the endoplasmic reticulum and is phosphorylated by TBK1 on the pLxIS motif, leading to recruitment and subsequent activation of the transcription factor IRF3 to induce expression of type I interferon and exert a potent anti-viral state. Exhibits 2',3' phosphodiester linkage-specific ligand recognition: can bind both 2'-3' linked cGAMP (2'-3'-cGAMP) and 3'-3' linked cGAMP but is preferentially activated by 2'-3' linked cGAMP. The preference for 2'-3'-cGAMP, compared to other linkage isomers is probably due to the ligand itself, whichs adopts an organized free-ligand conformation that resembles the STING1-bound conformation and pays low energy costs in changing into the active conformation. In addition to promote the production of type I interferons, plays a direct role in autophagy. Following cGAMP-binding, STING1 buds from the endoplasmic reticulum into COPII vesicles, which then form the endoplasmic reticulum-Golgi intermediate compartment (ERGIC). The ERGIC serves as the membrane source for WIPI2 recruitment and LC3 lipidation, leading to formation of autophagosomes that target cytosolic DNA or DNA viruses for degradation by the lysosome. Promotes autophagy by acting as a proton channel that directs proton efflux from the Golgi to facilitate MAP1LC3B/LC3B lipidation. The autophagy- and interferon-inducing activities can be uncoupled and autophagy induction is independent of TBK1 phosphorylation. Autophagy is also triggered upon infection by bacteria: following c-di-GMP-binding, which is produced by live Gram-positive bacteria, promotes reticulophagy. May be involved in translocon function, the translocon possibly being able to influence the induction of type I interferons. May be involved in transduction of apoptotic signals via its association with the major histocompatibility complex class II (MHC-II). In terms of biological role, (Microbial infection) Antiviral activity is antagonized by oncoproteins, such as papillomavirus (HPV) protein E7 and adenovirus early E1A protein. Such oncoproteins prevent the ability to sense cytosolic DNA. The sequence is that of Stimulator of interferon genes protein from Homo sapiens (Human).